The following is an 835-amino-acid chain: Cap-specific mRNA (nucleoside-2'-O-)-methyltransferase 1 (835 aa).

The Bipartite nuclear localization signal motif lies at 2 to 19 (RRRNDPECTAPIKKQKKR). A disordered region spans residues 24–68 (ALNLSAASGDEPPSSVNHAAKASTTSLSGSDSETEGKQHGSDSFD). A phosphoserine mark is found at Ser28, Ser31, Ser53, Ser66, and Ser91. Residues 37-54 (SSVNHAAKASTTSLSGSD) are compositionally biased toward polar residues. Positions 57-68 (TEGKQHGSDSFD) are enriched in basic and acidic residues. The 47-residue stretch at 87–133 (YNSVSQKLMAKMGFREGEGLGKYSQGRKDIVEASNQKGRRGLGLTLQ) folds into the G-patch domain. Lys108 bears the N6-acetyllysine mark. Residues 203 to 207 (KSVFD) and Arg218 contribute to the substrate site. A RrmJ-type SAM-dependent 2'-O-MTase domain is found at 231-450 (FFLNRAAMKM…ERYVVCKGLK (220 aa)). Asn234 provides a ligand contact to S-adenosyl-L-methionine. Lys239 is a catalytic residue. S-adenosyl-L-methionine is bound by residues 277 to 283 (CAGPGGF) and 335 to 336 (DI). Asp364 is an active-site residue. 374–376 (NLQ) provides a ligand contact to substrate. Residue Lys404 is the Proton acceptor of the active site. Residue Asn439 coordinates substrate. The segment at 727–835 (SSGTPKLSYT…VLSFIQTHSA (109 aa)) is interaction with POLR2A. The 35-residue stretch at 752–786 (RTVNEPWTMGFSKSFKRKFFYNKKTKISTFDLPAD) folds into the WW domain.

Interacts with POLR2A (via C-terminus).

Its subcellular location is the nucleus. It carries out the reaction a 5'-end (N(7)-methyl 5'-triphosphoguanosine)-ribonucleoside in mRNA + S-adenosyl-L-methionine = a 5'-end (N(7)-methyl 5'-triphosphoguanosine)-(2'-O-methyl-ribonucleoside) in mRNA + S-adenosyl-L-homocysteine + H(+). Its function is as follows. S-adenosyl-L-methionine-dependent methyltransferase that mediates mRNA cap1 2'-O-ribose methylation to the 5'-cap structure of mRNAs. Methylates the ribose of the first nucleotide of a m(7)GpppG-capped mRNA and small nuclear RNA (snRNA) to produce m(7)GpppRm (cap1). Displays a preference for cap0 transcripts. Cap1 modification is linked to higher levels of translation. May be involved in the interferon response pathway. The sequence is that of Cap-specific mRNA (nucleoside-2'-O-)-methyltransferase 1 (CMTR1) from Ailuropoda melanoleuca (Giant panda).